The following is a 186-amino-acid chain: Biphenyl dioxygenase subunit beta (186 aa).

It belongs to the bacterial ring-hydroxylating dioxygenase beta subunit family. Heterohexamer consisting of 3 BphA subunits and 3 BphE subunits. A ferredoxin (BphF) and a ferredoxin reductase (BphG) must be present to obtain activity.

It carries out the reaction biphenyl + NADH + O2 + H(+) = (2R,3S)-3-phenylcyclohexa-3,5-diene-1,2-diol + NAD(+). It participates in xenobiotic degradation; biphenyl degradation; 2-hydroxy-2,4-pentadienoate and benzoate from biphenyl: step 1/4. The beta subunit may be responsible for the substrate specificity of the enzyme. The protein is Biphenyl dioxygenase subunit beta (bphE) of Comamonas testosteroni (Pseudomonas testosteroni).